Here is a 201-residue protein sequence, read N- to C-terminus: Small ribosomal subunit protein uS4c (201 aa).

The tract at residues 20 to 44 (GLTSKRPTVGSELRNQSRSTKKSQY) is disordered. The region spanning 89 to 150 (MRLDNILFRL…NKKSKTLIQN (62 aa)) is the S4 RNA-binding domain.

It belongs to the universal ribosomal protein uS4 family. As to quaternary structure, part of the 30S ribosomal subunit. Contacts protein S5. The interaction surface between S4 and S5 is involved in control of translational fidelity.

The protein resides in the plastid. Its subcellular location is the chloroplast. In terms of biological role, one of the primary rRNA binding proteins, it binds directly to 16S rRNA where it nucleates assembly of the body of the 30S subunit. Its function is as follows. With S5 and S12 plays an important role in translational accuracy. The chain is Small ribosomal subunit protein uS4c (rps4) from Lotus japonicus (Lotus corniculatus var. japonicus).